We begin with the raw amino-acid sequence, 344 residues long: MITERQSNILNLIVDLFTQTHEPVGSKALQSVIASSSATIRNDMAKLEKLGLLEKAHTSSGRMPSAAGFKYFVEHSLNLGSIDEQDFYQLVKAFDFEAFKLEDVLLRASQMLSDMTGYTAAILDVEPARQRLTGFDIVQLSSHDALAVLTLDESKPLTVQFAIPKNFMNRDLLVLKGIVADRLLGKDVMTVHYKLRTEIPQIVQKYFTVTDNVLDLFDYIFVGLFRETIFVSGKVAALDYAGLVTYQFLDEEQRLALSIRQSLSEEEMATVQVADSSEPALANVTLLTYKFLIPYRGFGLLSLIGPVDMDYRRSVSLINVIGQLLAVKLRDYYRYLNSNHYEVH.

This sequence belongs to the HrcA family.

Its function is as follows. Negative regulator of class I heat shock genes (grpE-dnaK-dnaJ and groELS operons). Prevents heat-shock induction of these operons. The sequence is that of Heat-inducible transcription repressor HrcA from Streptococcus equi subsp. zooepidemicus (strain MGCS10565).